A 585-amino-acid polypeptide reads, in one-letter code: Putative indole-3-acetic acid-amido synthetase GH3.9 (585 aa).

Belongs to the IAA-amido conjugating enzyme family.

In terms of biological role, catalyzes the synthesis of indole-3-acetic acid (IAA)-amino acid conjugates, providing a mechanism for the plant to cope with the presence of excess auxin. The sequence is that of Putative indole-3-acetic acid-amido synthetase GH3.9 (GH3.9) from Arabidopsis thaliana (Mouse-ear cress).